A 113-amino-acid polypeptide reads, in one-letter code: UPF0102 protein CHU_0465 (113 aa).

It belongs to the UPF0102 family.

The chain is UPF0102 protein CHU_0465 from Cytophaga hutchinsonii (strain ATCC 33406 / DSM 1761 / CIP 103989 / NBRC 15051 / NCIMB 9469 / D465).